Reading from the N-terminus, the 156-residue chain is ATP synthase subunit b (156 aa).

A helical transmembrane segment spans residues 7 to 29 (LLGQAISFALFVWFCIKFVWPPL).

Belongs to the ATPase B chain family. In terms of assembly, F-type ATPases have 2 components, F(1) - the catalytic core - and F(0) - the membrane proton channel. F(1) has five subunits: alpha(3), beta(3), gamma(1), delta(1), epsilon(1). F(0) has three main subunits: a(1), b(2) and c(10-14). The alpha and beta chains form an alternating ring which encloses part of the gamma chain. F(1) is attached to F(0) by a central stalk formed by the gamma and epsilon chains, while a peripheral stalk is formed by the delta and b chains.

The protein localises to the cell inner membrane. F(1)F(0) ATP synthase produces ATP from ADP in the presence of a proton or sodium gradient. F-type ATPases consist of two structural domains, F(1) containing the extramembraneous catalytic core and F(0) containing the membrane proton channel, linked together by a central stalk and a peripheral stalk. During catalysis, ATP synthesis in the catalytic domain of F(1) is coupled via a rotary mechanism of the central stalk subunits to proton translocation. Functionally, component of the F(0) channel, it forms part of the peripheral stalk, linking F(1) to F(0). The protein is ATP synthase subunit b of Shewanella sp. (strain W3-18-1).